Here is a 146-residue protein sequence, read N- to C-terminus: Hemoglobin subunit beta (146 aa).

An N-acetylvaline modification is found at V1. Residues 2–146 (HLTDGEKNAL…VANALAHKYH (145 aa)) enclose the Globin domain. A Phosphoserine modification is found at S44. At K59 the chain carries N6-acetyllysine. H63 provides a ligand contact to heme b. Position 82 is an N6-acetyllysine (K82). Residue H92 participates in heme b binding. An S-nitrosocysteine modification is found at C93. K144 bears the N6-acetyllysine mark.

This sequence belongs to the globin family. Heterotetramer of two alpha chains and two beta chains. Red blood cells.

Its function is as follows. Involved in oxygen transport from the lung to the various peripheral tissues. This Otospermophilus beecheyi (California ground squirrel) protein is Hemoglobin subunit beta.